A 158-amino-acid chain; its full sequence is NADH-quinone oxidoreductase subunit B (158 aa).

[4Fe-4S] cluster is bound by residues cysteine 37, cysteine 38, cysteine 102, and cysteine 132.

This sequence belongs to the complex I 20 kDa subunit family. As to quaternary structure, NDH-1 is composed of 14 different subunits. Subunits NuoB, C, D, E, F, and G constitute the peripheral sector of the complex. It depends on [4Fe-4S] cluster as a cofactor.

Its subcellular location is the cell inner membrane. The catalysed reaction is a quinone + NADH + 5 H(+)(in) = a quinol + NAD(+) + 4 H(+)(out). Its function is as follows. NDH-1 shuttles electrons from NADH, via FMN and iron-sulfur (Fe-S) centers, to quinones in the respiratory chain. Couples the redox reaction to proton translocation (for every two electrons transferred, four hydrogen ions are translocated across the cytoplasmic membrane), and thus conserves the redox energy in a proton gradient. This is NADH-quinone oxidoreductase subunit B from Leptothrix cholodnii (strain ATCC 51168 / LMG 8142 / SP-6) (Leptothrix discophora (strain SP-6)).